The primary structure comprises 274 residues: Shikimate dehydrogenase (NADP(+)) (274 aa).

Residues 14 to 16 and Thr61 each bind shikimate; that span reads SKS. Residue Lys65 is the Proton acceptor of the active site. An NADP(+)-binding site is contributed by Glu77. Residues Asn86 and Asp102 each coordinate shikimate. Residues 126–130, 149–154, and Met212 each bind NADP(+); these read GAGGA and NRTLEK. Tyr214 lines the shikimate pocket. Gly237 serves as a coordination point for NADP(+).

Belongs to the shikimate dehydrogenase family. Homodimer.

The enzyme catalyses shikimate + NADP(+) = 3-dehydroshikimate + NADPH + H(+). It functions in the pathway metabolic intermediate biosynthesis; chorismate biosynthesis; chorismate from D-erythrose 4-phosphate and phosphoenolpyruvate: step 4/7. Involved in the biosynthesis of the chorismate, which leads to the biosynthesis of aromatic amino acids. Catalyzes the reversible NADPH linked reduction of 3-dehydroshikimate (DHSA) to yield shikimate (SA). This Actinobacillus pleuropneumoniae serotype 5b (strain L20) protein is Shikimate dehydrogenase (NADP(+)).